A 98-amino-acid chain; its full sequence is Small ribosomal subunit protein uS19 (98 aa).

Residues 77–98 are disordered; the sequence is TRTFRGHAGGKAEKGGSAPKKK.

This sequence belongs to the universal ribosomal protein uS19 family.

Protein S19 forms a complex with S13 that binds strongly to the 16S ribosomal RNA. In Chlorobium phaeobacteroides (strain DSM 266 / SMG 266 / 2430), this protein is Small ribosomal subunit protein uS19.